The sequence spans 438 residues: Polycomb protein eed-B (438 aa).

A disordered region spans residues 1-70 (MSEASGRAAG…GRKGWGKGKW (70 aa)). Residues 40–57 (SIESGTNTERPDTPTNAA) are compositionally biased toward polar residues. WD repeat units follow at residues 88-131 (DHNQ…DIRL), 139-182 (DADE…CIKH), 185-225 (GHGN…LVAI), 231-270 (GHRDEVLSADYDLLGEKIMSCGMDHSLKLWRINSLRMKTA), 301-338 (IHRNYVDCVRWLGDLILSKSCENAIVCWKPGKMEDDIE), 356-396 (SQCD…PHKA), and 405-438 (KCASAIRQTSFSRDSSVLIAVCDDSTIWRWDRLR).

This sequence belongs to the WD repeat ESC family. As to quaternary structure, component of the prc2/eed-ezh2 complex. Can interact with ezh2, hdac1 and taf9. Interacts with yy1.

It is found in the nucleus. Its function is as follows. Polycomb group (PcG) protein. Component of the prc2/eed-ezh2 complex, which methylates 'Lys-9' and 'Lys-27' of histone H3, leading to transcriptional repression of the affected target gene. May play a role in neural induction. The protein is Polycomb protein eed-B (eed-b) of Xenopus laevis (African clawed frog).